The following is a 332-amino-acid chain: MDKTVLDASLEPLKGKTIAVIGYGNQGRVQANIMRENGLNVIIGNVKDRYYDLAIKEGFEVYDIGEAVKKADVAFLLIPDEIMKEIYEKKIAPILEGKKEFVLDFASGYNVAFGLIRPPKNVDTVMVAPRMVGEGIMDLHKQGKGYPVLLGVKQDASGKAWDYAKAIAKGIGAIPGGIAVISSFEEEALLDLMSEHTWVPILFGAIKACFDVAVKEYGVSPEAALLEFYASGELVEIARLIAEEGIFNQMVHHSTTSQYGTLTRMFKYYDLVKEIVKDEAKYIWDGSFAKEWTLEQQAGYPVFYRLWELAVQSEMAKAEKELYKILRRKVSD.

In terms of domain architecture, KARI N-terminal Rossmann spans 1 to 182 (MDKTVLDASL…AIPGGIAVIS (182 aa)). The region spanning 183–329 (SFEEEALLDL…KELYKILRRK (147 aa)) is the KARI C-terminal knotted domain.

This sequence belongs to the ketol-acid reductoisomerase family.

The enzyme catalyses (2R)-2,3-dihydroxy-3-methylbutanoate + NADP(+) = (2S)-2-acetolactate + NADPH + H(+). The catalysed reaction is (2R,3R)-2,3-dihydroxy-3-methylpentanoate + NADP(+) = (S)-2-ethyl-2-hydroxy-3-oxobutanoate + NADPH + H(+). It functions in the pathway amino-acid biosynthesis; L-isoleucine biosynthesis; L-isoleucine from 2-oxobutanoate: step 2/4. Its pathway is amino-acid biosynthesis; L-valine biosynthesis; L-valine from pyruvate: step 2/4. This Saccharolobus solfataricus (strain ATCC 35092 / DSM 1617 / JCM 11322 / P2) (Sulfolobus solfataricus) protein is Putative ketol-acid reductoisomerase 3 (ilvC3).